Here is a 127-residue protein sequence, read N- to C-terminus: Fluoride-specific ion channel FluC (127 aa).

Transmembrane regions (helical) follow at residues 4–24 (LLLAVFIGGGTGSVARWFLSM), 35–55 (LGTLTANLIGAFIIGVGLAWF), 71–91 (TGFCGGLTTFSTFSAEVVFLL), and 103–123 (IAVNMLGSFAMTALAFWLFSA). Positions 75 and 78 each coordinate Na(+).

The protein belongs to the fluoride channel Fluc/FEX (TC 1.A.43) family.

The protein resides in the cell inner membrane. The enzyme catalyses fluoride(in) = fluoride(out). With respect to regulation, na(+) is not transported, but it plays an essential structural role and its presence is essential for fluoride channel function. Its function is as follows. Fluoride-specific ion channel. Important for reducing fluoride concentration in the cell, thus reducing its toxicity. This chain is Fluoride-specific ion channel FluC, found in Enterobacter sp. (strain 638).